The sequence spans 179 residues: Tetratricopeptide repeat protein 36 (179 aa).

3 TPR repeats span residues 43 to 76 (SSQL…CPLN), 77 to 110 (PSAY…AGPK), and 115 to 148 (CQAY…GSSF).

It belongs to the TTC36 family.

In Caenorhabditis briggsae, this protein is Tetratricopeptide repeat protein 36.